A 749-amino-acid chain; its full sequence is Cytosolic phospholipase A2 (749 aa).

A phospholipid binding region spans residues 1–178 (MSFIDPYQHI…MKKLLGPKNS (178 aa)). A Phosphoserine modification is found at Ser2. Positions 6–122 (PYQHIIVEHH…KVGEKKQVPF (117 aa)) constitute a C2 domain. Positions 40, 41, 43, 65, 93, 94, and 95 each coordinate Ca(2+). The PLA2c domain occupies 140–740 (SSPDLRFSMA…SSVEARRFFN (601 aa)). Ser228 functions as the Nucleophile in the catalytic mechanism. A Phosphothreonine modification is found at Thr268. The segment at 426–458 (AKHIVSNDSSDSDDESQGPKGTEHEEAEREYQN) is disordered. Ser434, Ser435, and Ser437 each carry phosphoserine. The span at 446 to 457 (GTEHEEAEREYQ) shows a compositional bias: basic and acidic residues. Position 505 is a phosphoserine; by MAPK (Ser505). A Phosphoserine modification is found at Ser515. Lys541 participates in a covalent cross-link: Glycyl lysine isopeptide (Lys-Gly) (interchain with G-Cter in SUMO2). Asp549 acts as the Proton acceptor in catalysis. Residue Lys606 forms a Glycyl lysine isopeptide (Lys-Gly) (interchain with G-Cter in SUMO2) linkage. Residues Ser727 and Ser729 each carry the phosphoserine modification.

Interacts with KAT5. Phosphorylated at both Ser-505 and Ser-727 in response to mitogenic stimuli. Detected in granulosa cells after stimulation with chorionic gonadotropin (at protein level).

Its subcellular location is the cytoplasm. It localises to the golgi apparatus membrane. The protein localises to the nucleus envelope. The enzyme catalyses a 1,2-diacyl-sn-glycero-3-phosphocholine + H2O = a 1-acyl-sn-glycero-3-phosphocholine + a fatty acid + H(+). It catalyses the reaction a 1-O-alkyl-2-acyl-sn-glycero-3-phosphocholine + H2O = a 1-O-alkyl-sn-glycero-3-phosphocholine + a fatty acid + H(+). The catalysed reaction is a 1-acyl-sn-glycero-3-phosphocholine + H2O = sn-glycerol 3-phosphocholine + a fatty acid + H(+). It carries out the reaction 1-hexadecanoyl-2-(5Z,8Z,11Z,14Z-eicosatetraenoyl)-sn-glycero-3-phosphocholine + H2O = 1-hexadecanoyl-sn-glycero-3-phosphocholine + (5Z,8Z,11Z,14Z)-eicosatetraenoate + H(+). The enzyme catalyses 1,2-di-(5Z,8Z,11Z,14Z-eicosatetraenoyl)-sn-glycero-3-phosphocholine + H2O = 1-(5Z,8Z,11Z,14Z-eicosatetraenoyl)-sn-glycero-3-phosphocholine + (5Z,8Z,11Z,14Z)-eicosatetraenoate + H(+). It catalyses the reaction 1-octadecanoyl-2-(5Z,8Z,11Z,14Z-eicosatetraenoyl)-sn-glycero-3-phosphocholine + H2O = 1-octadecanoyl-sn-glycero-3-phosphocholine + (5Z,8Z,11Z,14Z)-eicosatetraenoate + H(+). The catalysed reaction is 1-hexadecanoyl-2-(9Z,12Z-octadecadienoyl)-sn-glycero-3-phosphocholine + H2O = (9Z,12Z)-octadecadienoate + 1-hexadecanoyl-sn-glycero-3-phosphocholine + H(+). It carries out the reaction 1-octadecanoyl-2-(9Z,12Z,15Z-octadecatrienoyl)-sn-glycero-3-phosphocholine + H2O = (9Z,12Z,15Z)-octadecatrienoate + 1-octadecanoyl-sn-glycero-3-phosphocholine + H(+). The enzyme catalyses 1-(5Z,8Z,11Z,14Z-eicosatetraenoyl)-2-hexadecanoyl-sn-glycero-3-phosphocholine + H2O = 1-(5Z,8Z,11Z,14Z-eicosatetraenoyl)-sn-glycero-3-phosphocholine + hexadecanoate + H(+). It catalyses the reaction 1-O-hexadecyl-2-(5Z,8Z,11Z,14Z)-eicosatetraenoyl-sn-glycero-3-phosphocholine + H2O = 1-O-hexadecyl-sn-glycero-3-phosphocholine + (5Z,8Z,11Z,14Z)-eicosatetraenoate + H(+). The catalysed reaction is 1,2-di-(9Z-octadecenoyl)-sn-glycero-3-phospho-(1'-sn-glycerol) + H2O = 1-(9Z-octadecenoyl)-sn-glycero-3-phospho-(1'-sn-glycerol) + (9Z)-octadecenoate + H(+). It carries out the reaction 1-octadecanoyl-2-(5Z,8Z,11Z,14Z-eicosatetraenoyl)-sn-glycero-3-phosphate + H2O = 1-octadecanoyl-sn-glycero-3-phosphate + (5Z,8Z,11Z,14Z)-eicosatetraenoate + H(+). The enzyme catalyses 1-hexadecanoyl-sn-glycero-3-phosphocholine + H2O = sn-glycerol 3-phosphocholine + hexadecanoate + H(+). It catalyses the reaction 2-(prostaglandin E2)-sn-glycero-3-phosphoethanolamine + H2O = sn-glycero-3-phosphoethanolamine + prostaglandin E2 + H(+). The catalysed reaction is 2-[(15S)-hydroxy-(5Z,8Z,11Z,13E)-eicosatetraenoyl]-sn-glycero-3-phosphocholine + H2O = (15S)-hydroxy-(5Z,8Z,11Z,13E)-eicosatetraenoate + sn-glycerol 3-phosphocholine + H(+). It carries out the reaction 2-[(15R)-hydroxy-(5Z,8Z,11Z,13E)-eicosatetraenoyl]-sn-glycero-3-phosphocholine + H2O = (15R)-hydroxy-(5Z,8Z,11Z,13E)-eicosatetraenoate + sn-glycerol 3-phosphocholine + H(+). The enzyme catalyses 2-(prostaglandin E2)-sn-glycero-3-phosphocholine + H2O = prostaglandin E2 + sn-glycerol 3-phosphocholine + H(+). It catalyses the reaction 2-[(11R)-hydroxy-(5Z,8Z,12E,14Z)-eicosatetraenoyl]-sn-glycero-3-phosphocholine + H2O = (11R)-hydroxy-(5Z,8Z,12E,14Z)-eicosatetraenoate + sn-glycerol 3-phosphocholine + H(+). The catalysed reaction is 1-(5Z,8Z,11Z,14Z-eicosatetraenoyl)-2-O-hexadecyl-sn-glycero-3-phosphocholine + H2O = 2-O-hexadecyl-sn-glycero-3-phosphocholine + (5Z,8Z,11Z,14Z)-eicosatetraenoate + H(+). It carries out the reaction 1-octadecanoyl-2-(5Z,8Z,11Z,14Z-eicosatetraenoyl)-sn-glycero-3-phosphocholine + glycerol = 1-(5Z,8Z,11Z,14Z-eicosatetraenoyl)-glycerol + 1-octadecanoyl-sn-glycero-3-phosphocholine. The enzyme catalyses 1-octadecanoyl-2-(9Z,12Z,15Z-octadecatrienoyl)-sn-glycero-3-phosphocholine + glycerol = 1-(9Z,12Z,15Z-octadecatrienoyl)-glycerol + 1-octadecanoyl-sn-glycero-3-phosphocholine. Its pathway is membrane lipid metabolism; glycerophospholipid metabolism. The protein operates within lipid metabolism; arachidonate metabolism. It functions in the pathway lipid metabolism; prostaglandin biosynthesis. It participates in lipid metabolism; leukotriene B4 biosynthesis. With respect to regulation, activated by cytosolic calcium, which is necessary for binding to membrane lipids. Activated by phosphorylation in response to mitogenic stimuli. Has primarily calcium-dependent phospholipase and lysophospholipase activities, with a major role in membrane lipid remodeling and biosynthesis of lipid mediators of the inflammatory response. Plays an important role in embryo implantation and parturition through its ability to trigger prostanoid production. Preferentially hydrolyzes the ester bond of the fatty acyl group attached at sn-2 position of phospholipids (phospholipase A2 activity). Selectively hydrolyzes sn-2 arachidonoyl group from membrane phospholipids, providing the precursor for eicosanoid biosynthesis via the cyclooxygenase pathway. In an alternative pathway of eicosanoid biosynthesis, hydrolyzes sn-2 fatty acyl chain of eicosanoid lysophopholipids to release free bioactive eicosanoids. Hydrolyzes the ester bond of the fatty acyl group attached at sn-1 position of phospholipids (phospholipase A1 activity) only if an ether linkage rather than an ester linkage is present at the sn-2 position. This hydrolysis is not stereospecific. Has calcium-independent phospholipase A2 and lysophospholipase activities in the presence of phosphoinositides. Has O-acyltransferase activity. Catalyzes the transfer of fatty acyl chains from phospholipids to a primary hydroxyl group of glycerol (sn-1 or sn-3), potentially contributing to monoacylglycerol synthesis. The polypeptide is Cytosolic phospholipase A2 (PLA2G4A) (Bos taurus (Bovine)).